Consider the following 527-residue polypeptide: Heat shock factor protein HSF8 (527 aa).

Over residues 1–13 the composition is skewed to low complexity; that stretch reads MEPNSSGSGKAAV. Disordered regions lie at residues 1 to 37, 130 to 160, 243 to 275, 300 to 343, and 476 to 501; these read MEPNSSGSGKAAVGDGGGGGAPMLQPAPAPAPMPSAN, RRKPAHGHAQQQQQPHGHAQQQMQPPGHSAS, NESNKRIAEGSKKRRIKQDIESQDPSVTPADGQ, SPRL…TSGK, and QSPSSPDAAMDDDISNTSETKPQING. The span at 25–37 shows a compositional bias: pro residues; it reads QPAPAPAPMPSAN. The DNA-binding element occupies 39–133; sequence PPPFLVKTYD…LLKSISRRKP (95 aa). Positions 136–157 are enriched in low complexity; that stretch reads GHAQQQQQPHGHAQQQMQPPGH. Composition is skewed to polar residues over residues 319–328 and 491–501; these read SPQSNASSGR and NTSETKPQING.

This sequence belongs to the HSF family. In terms of assembly, homotrimer. Post-translationally, exhibits temperature-dependent phosphorylation.

It is found in the nucleus. Its function is as follows. DNA-binding protein that specifically binds heat shock promoter elements (HSE) and activates transcription. The polypeptide is Heat shock factor protein HSF8 (HSF8) (Solanum peruvianum (Peruvian tomato)).